Consider the following 1018-residue polypeptide: Probable inorganic carbon transporter subunit DabA 2 (1018 aa).

4 residues coordinate Zn(2+): Cys489, Asp491, His674, and Cys689.

It belongs to the inorganic carbon transporter (TC 9.A.2) DabA family. In terms of assembly, forms a complex with DabB. Zn(2+) is required as a cofactor.

It localises to the cell inner membrane. Its function is as follows. Part of an energy-coupled inorganic carbon pump. This is Probable inorganic carbon transporter subunit DabA 2 from Sorangium cellulosum (strain So ce56) (Polyangium cellulosum (strain So ce56)).